We begin with the raw amino-acid sequence, 473 residues long: Glutamate--tRNA ligase 1 (473 aa).

The 'HIGH' region signature appears at 11-21; it reads PSPTGYLHIGG. Residues 113-133 are compositionally biased toward basic and acidic residues; the sequence is KARAEGRPPRYDGRWRDRDPS. Residues 113–136 are disordered; it reads KARAEGRPPRYDGRWRDRDPSEAP. The 'KMSKS' region signature appears at 240 to 244; the sequence is KLSKR. K243 is an ATP binding site.

The protein belongs to the class-I aminoacyl-tRNA synthetase family. Glutamate--tRNA ligase type 1 subfamily. In terms of assembly, monomer.

Its subcellular location is the cytoplasm. The catalysed reaction is tRNA(Glu) + L-glutamate + ATP = L-glutamyl-tRNA(Glu) + AMP + diphosphate. In terms of biological role, catalyzes the attachment of glutamate to tRNA(Glu) in a two-step reaction: glutamate is first activated by ATP to form Glu-AMP and then transferred to the acceptor end of tRNA(Glu). The sequence is that of Glutamate--tRNA ligase 1 from Brucella melitensis biotype 1 (strain ATCC 23456 / CCUG 17765 / NCTC 10094 / 16M).